We begin with the raw amino-acid sequence, 166 residues long: NAD(P)H-quinone oxidoreductase subunit I, chloroplastic (166 aa).

4Fe-4S ferredoxin-type domains are found at residues 55-84 (GRIH…VDWK) and 95-124 (LNYS…MTEE). Residues Cys64, Cys67, Cys70, Cys74, Cys104, Cys107, Cys110, and Cys114 each coordinate [4Fe-4S] cluster.

This sequence belongs to the complex I 23 kDa subunit family. In terms of assembly, NDH is composed of at least 16 different subunits, 5 of which are encoded in the nucleus. Requires [4Fe-4S] cluster as cofactor.

It localises to the plastid. Its subcellular location is the chloroplast thylakoid membrane. The catalysed reaction is a plastoquinone + NADH + (n+1) H(+)(in) = a plastoquinol + NAD(+) + n H(+)(out). It carries out the reaction a plastoquinone + NADPH + (n+1) H(+)(in) = a plastoquinol + NADP(+) + n H(+)(out). In terms of biological role, NDH shuttles electrons from NAD(P)H:plastoquinone, via FMN and iron-sulfur (Fe-S) centers, to quinones in the photosynthetic chain and possibly in a chloroplast respiratory chain. The immediate electron acceptor for the enzyme in this species is believed to be plastoquinone. Couples the redox reaction to proton translocation, and thus conserves the redox energy in a proton gradient. This chain is NAD(P)H-quinone oxidoreductase subunit I, chloroplastic, found in Enydra sessilis (Smallray swampwort).